Here is a 141-residue protein sequence, read N- to C-terminus: Nucleoside triphosphatase NudI (141 aa).

The Nudix hydrolase domain maps to 1–141; the sequence is MRQRTIVCPI…RLTFTQKGLL (141 aa). Residues 38–59 carry the Nudix box motif; sequence GGMEPGETMEEALRREIREELG.

This sequence belongs to the Nudix hydrolase family. NudI subfamily. Monomer. Mg(2+) is required as a cofactor.

The catalysed reaction is a ribonucleoside 5'-triphosphate + H2O = a ribonucleoside 5'-phosphate + diphosphate + H(+). It catalyses the reaction a 2'-deoxyribonucleoside 5'-triphosphate + H2O = a 2'-deoxyribonucleoside 5'-phosphate + diphosphate + H(+). It carries out the reaction dUTP + H2O = dUMP + diphosphate + H(+). The enzyme catalyses dTTP + H2O = dTMP + diphosphate + H(+). The catalysed reaction is dCTP + H2O = dCMP + diphosphate + H(+). Functionally, catalyzes the hydrolysis of nucleoside triphosphates, with a preference for pyrimidine deoxynucleoside triphosphates (dUTP, dTTP and dCTP). This Enterobacter sp. (strain 638) protein is Nucleoside triphosphatase NudI.